We begin with the raw amino-acid sequence, 397 residues long: Phosphoglycerate kinase (397 aa).

Substrate is bound by residues 21–23, Arg-37, 60–63, Arg-119, and Arg-152; these read DFN and HLGR. ATP-binding positions include Lys-203, Gly-294, Glu-325, and 354-357; that span reads GGDS.

The protein belongs to the phosphoglycerate kinase family. In terms of assembly, monomer.

Its subcellular location is the cytoplasm. The enzyme catalyses (2R)-3-phosphoglycerate + ATP = (2R)-3-phospho-glyceroyl phosphate + ADP. It functions in the pathway carbohydrate degradation; glycolysis; pyruvate from D-glyceraldehyde 3-phosphate: step 2/5. The chain is Phosphoglycerate kinase from Chlorobaculum tepidum (strain ATCC 49652 / DSM 12025 / NBRC 103806 / TLS) (Chlorobium tepidum).